Reading from the N-terminus, the 151-residue chain is 3-dehydroquinate dehydratase (151 aa).

Tyr-24 (proton acceptor) is an active-site residue. Asn-76, His-82, and Asp-89 together coordinate substrate. His-102 serves as the catalytic Proton donor. Substrate-binding positions include Val-103–Ser-104 and Arg-113.

This sequence belongs to the type-II 3-dehydroquinase family. Homododecamer.

It carries out the reaction 3-dehydroquinate = 3-dehydroshikimate + H2O. Its pathway is metabolic intermediate biosynthesis; chorismate biosynthesis; chorismate from D-erythrose 4-phosphate and phosphoenolpyruvate: step 3/7. Catalyzes a trans-dehydration via an enolate intermediate. The chain is 3-dehydroquinate dehydratase from Rhodopseudomonas palustris (strain BisA53).